The sequence spans 198 residues: tRNA (pseudouridine(54)-N(1))-methyltransferase (198 aa).

S-adenosyl-L-methionine is bound by residues leucine 130, glycine 153, 176–181, and cysteine 186; that span reads LSPLEL.

The protein belongs to the methyltransferase superfamily. TrmY family. As to quaternary structure, homodimer.

It localises to the cytoplasm. The enzyme catalyses pseudouridine(54) in tRNA + S-adenosyl-L-methionine = N(1)-methylpseudouridine(54) in tRNA + S-adenosyl-L-homocysteine + H(+). Functionally, specifically catalyzes the N1-methylation of pseudouridine at position 54 (Psi54) in tRNAs. The protein is tRNA (pseudouridine(54)-N(1))-methyltransferase of Methanococcus maripaludis (strain C6 / ATCC BAA-1332).